The following is a 1050-amino-acid chain: Sentrin-specific protease 7 (1050 aa).

Disordered regions lie at residues 1–28 (MDKRKLGRRPSSSEIITEGKRKKSSSDL), 183–288 (PPVT…DVKY), and 304–365 (RRLR…KSDF). Phosphoserine is present on residues Ser-11, Ser-12, Ser-13, and Ser-25. The span at 196-211 (LQSEQLSSSSDGSLES) shows a compositional bias: low complexity. Positions 259 to 271 (ISDTQPEDLNSGS) are enriched in polar residues. The segment covering 273-288 (GCDHLEQESRNKDVKY) has biased composition (basic and acidic residues). Polar residues predominate over residues 310-320 (LPDSQYCTSLD). Basic and acidic residues-rich tracts occupy residues 321–331 (KSTEQTKKQED) and 338–365 (EFEKPSENYHQDPKLPEEITTKPTKSDF). Phosphoserine is present on residues Ser-373, Ser-433, Ser-443, and Ser-444. Residues 443–476 (SSDEEGPVEHKSSEILKLQSKQDRETTNENESTS) form a disordered region. Residues 449 to 469 (PVEHKSSEILKLQSKQDRETT) are compositionally biased toward basic and acidic residues. A protease region spans residues 760–1050 (LGVTNEDLEC…HLQQQKGSSS (291 aa)). Residues His-860 and Asp-939 contribute to the active site. Cys-992 acts as the Nucleophile in catalysis.

Belongs to the peptidase C48 family.

Its subcellular location is the cytoplasm. Functionally, protease that acts as a positive regulator of the cGAS-STING pathway by catalyzing desumoylation of CGAS. Desumoylation of CGAS promotes DNA-binding activity of CGAS, subsequent oligomerization and activation. Deconjugates SUMO2 and SUMO3 from targeted proteins, but not SUMO1. Catalyzes the deconjugation of poly-SUMO2 and poly-SUMO3 chains. Has very low efficiency in processing full-length SUMO proteins to their mature forms. This Homo sapiens (Human) protein is Sentrin-specific protease 7.